Here is a 506-residue protein sequence, read N- to C-terminus: Glutamate--tRNA ligase (506 aa).

The 'HIGH' region signature appears at 24–34 (PSPTGTPHVGL). The interval 124 to 147 (TPEEVEQRHRAKGEDPKRGYDNYD) is disordered. The span at 128 to 147 (VEQRHRAKGEDPKRGYDNYD) shows a compositional bias: basic and acidic residues. A 'KMSKS' region motif is present at residues 268–272 (KLSKR). Lys-271 is a binding site for ATP.

This sequence belongs to the class-I aminoacyl-tRNA synthetase family. Glutamate--tRNA ligase type 1 subfamily. In terms of assembly, monomer.

It localises to the cytoplasm. The enzyme catalyses tRNA(Glu) + L-glutamate + ATP = L-glutamyl-tRNA(Glu) + AMP + diphosphate. In terms of biological role, catalyzes the attachment of glutamate to tRNA(Glu) in a two-step reaction: glutamate is first activated by ATP to form Glu-AMP and then transferred to the acceptor end of tRNA(Glu). The sequence is that of Glutamate--tRNA ligase from Kocuria rhizophila (strain ATCC 9341 / DSM 348 / NBRC 103217 / DC2201).